The sequence spans 823 residues: Semaphorin-4B (823 aa).

The N-terminal stretch at 1–30 (MGRASRSAVLRRALLLLLLLLLLRTTTTRA) is a signal peptide. Residues 31-703 (LGPRISVPLG…WGADKSYWNE (673 aa)) lie on the Extracellular side of the membrane. Residues 34 to 510 (RISVPLGSEE…SHSGVVQVPV (477 aa)) enclose the Sema domain. Residues Asn-53, Asn-56, and Asn-83 are each glycosylated (N-linked (GlcNAc...) asparagine). Cys-107 and Cys-118 form a disulfide bridge. A glycan (N-linked (GlcNAc...) asparagine) is linked at Asn-129. 3 cysteine pairs are disulfide-bonded: Cys-136–Cys-145, Cys-273–Cys-386, and Cys-297–Cys-346. N-linked (GlcNAc...) asparagine glycans are attached at residues Asn-397 and Asn-512. A PSI domain is found at 512-582 (NCSLYPTCGD…RFLVPGKPCK (71 aa)). Cys-513 and Cys-530 form a disulfide bridge. 3 N-linked (GlcNAc...) asparagine glycosylation sites follow: Asn-567, Asn-615, and Asn-680. Positions 589–649 (NTVNTLACPL…FQCWSIEEGF (61 aa)) constitute an Ig-like C2-type domain. Cys-596 and Cys-642 are joined by a disulfide. The helical transmembrane segment at 704–724 (FLVMCTLFVFAMVLLFLFFLY) threads the bilayer. Residues 725–823 (RHRDGMKLFL…LGSEIRDSVV (99 aa)) are Cytoplasmic-facing. Residues Ser-779, Ser-780, Ser-804, and Ser-816 each carry the phosphoserine modification.

Belongs to the semaphorin family. As to quaternary structure, interacts with GIPC PDZ domain.

It is found in the membrane. Functionally, inhibits axonal extension by providing local signals to specify territories inaccessible for growing axons. The sequence is that of Semaphorin-4B from Mus musculus (Mouse).